We begin with the raw amino-acid sequence, 591 residues long: V-type ATP synthase alpha chain (591 aa).

Residue 242–249 coordinates ATP; that stretch reads GPFGAGKT.

This sequence belongs to the ATPase alpha/beta chains family.

It carries out the reaction ATP + H2O + 4 H(+)(in) = ADP + phosphate + 5 H(+)(out). Its function is as follows. Produces ATP from ADP in the presence of a proton gradient across the membrane. The V-type alpha chain is a catalytic subunit. This Chlamydia trachomatis serovar L2 (strain ATCC VR-902B / DSM 19102 / 434/Bu) protein is V-type ATP synthase alpha chain.